Consider the following 75-residue polypeptide: Antimicrobial peptide Meucin-49-1 (75 aa).

The first 22 residues, 1–22, serve as a signal peptide directing secretion; that stretch reads MNKKILLVIFIVTMLIVDEVNS.

This sequence belongs to the non-disulfide-bridged peptide (NDBP) superfamily. Long chain multifunctional peptide (group 2) family. As to expression, expressed by the venom gland.

The protein resides in the secreted. Antimicrobial peptide. This Mesobuthus eupeus (Lesser Asian scorpion) protein is Antimicrobial peptide Meucin-49-1.